The chain runs to 27 residues: Paragonial peptide PS-1 (27 aa).

The segment covering 1–17 (DVPSANANANNQRTAAA) has biased composition (low complexity). A disordered region spans residues 1–27 (DVPSANANANNQRTAAAKPQANAEASS).

As to expression, main cells of the accessory glands of males (paragonial gland).

Its subcellular location is the secreted. Its function is as follows. Represses female sexual receptivity and stimulates oviposition. This peptide has a low activity. The chain is Paragonial peptide PS-1 (PapC) from Drosophila funebris (Fruit fly).